Reading from the N-terminus, the 378-residue chain is tRNA-specific 2-thiouridylase MnmA (378 aa).

ATP is bound by residues 9 to 16 (GVSGGVDS) and Met35. Positions 94–96 (NPD) are interaction with target base in tRNA. The active-site Nucleophile is the Cys99. Cys99 and Cys195 are disulfide-bonded. An ATP-binding site is contributed by Gly123. The segment at 145 to 147 (KDQ) is interaction with tRNA. Cys195 serves as the catalytic Cysteine persulfide intermediate. Positions 307–308 (RY) are interaction with tRNA.

The protein belongs to the MnmA/TRMU family.

The protein resides in the cytoplasm. It carries out the reaction S-sulfanyl-L-cysteinyl-[protein] + uridine(34) in tRNA + AH2 + ATP = 2-thiouridine(34) in tRNA + L-cysteinyl-[protein] + A + AMP + diphosphate + H(+). Functionally, catalyzes the 2-thiolation of uridine at the wobble position (U34) of tRNA, leading to the formation of s(2)U34. This is tRNA-specific 2-thiouridylase MnmA from Xanthomonas campestris pv. campestris (strain 8004).